Reading from the N-terminus, the 269-residue chain is Hydroxypyruvate/pyruvate aldolase (269 aa).

His48 (proton acceptor) is an active-site residue. 2 residues coordinate a divalent metal cation: Glu152 and Asp178.

The protein belongs to the HpcH/HpaI aldolase family. It depends on a divalent metal cation as a cofactor.

It carries out the reaction D-glyceraldehyde + pyruvate = 2-dehydro-3-deoxy-L-galactonate. Aldolase which can catalyze in vitro the aldolisation reaction between hydroxypyruvate (HPA) or pyruvate (PA) and D-glyceraldehyde (D-GA). The condensation of pyruvate and D-glyceraldehyde produces 2-dehydro-3-deoxy-L-galactonate as the major product. Has weak activity with hydroxypyruvate and D-glyceraldehyde. The polypeptide is Hydroxypyruvate/pyruvate aldolase (Delftia acidovorans (strain DSM 14801 / SPH-1)).